We begin with the raw amino-acid sequence, 492 residues long: GPI alpha-1,6-mannosyltransferase 2 (492 aa).

At 1–13 the chain is on the cytoplasmic side; sequence MGLLDPSQKEVLK. The helical transmembrane segment at 14-34 threads the bilayer; the sequence is FAVSCRILTLVLQALFNIIIP. The Lumenal segment spans residues 35-77; the sequence is DHHADAFSPPRLAPSGSVDQLVEALLGGLSRWDAEHFLFIAEH. A helical transmembrane segment spans residues 78–98; it reads GYLYEHNFAFFPGFPLALLMG. Residues 99-113 lie on the Cytoplasmic side of the membrane; sequence TELLRPLQGLLSERS. The helical transmembrane segment at 114 to 134 threads the bilayer; sequence CLLVSVALLNSLFSVLAAVAL. Residues 135 to 136 lie on the Lumenal side of the membrane; that stretch reads HD. The helical transmembrane segment at 137–157 threads the bilayer; the sequence is LGCLVLHCPRQAFCAALLFCL. Over 158 to 161 the chain is Cytoplasmic; that stretch reads SPAN. A helical transmembrane segment spans residues 162–182; the sequence is VFLAAGYSEALFAFLTFSAMG. The Lumenal segment spans residues 183 to 192; it reads QLERGRGWAS. The chain crosses the membrane as a helical span at residues 193–213; the sequence is GLLFALAAGVRSNGLVSVGFL. The Cytoplasmic portion of the chain corresponds to 214-234; that stretch reads LHSQCRGFCSSLVVLDPLKGL. The helical transmembrane segment at 235 to 255 threads the bilayer; sequence VKLMASLCLSVLTVSLPFALF. Residues 256-327 are Lumenal-facing; it reads QYYAYTQFCF…RYYELRQVPN (72 aa). Residues 328 to 348 form a helical membrane-spanning segment; it reads FLLATPVTVLVVWATWTYVTA. Residues 349 to 378 lie on the Cytoplasmic side of the membrane; sequence HPWLCLTLGLQRTKDRESLEKPHPGFLSAK. A helical membrane pass occupies residues 379–399; the sequence is VFVYLVHAAALLAFGGLCMHV. The Lumenal segment spans residues 400–468; that stretch reads QVLTRLLGSS…NWKTCSPVTK (69 aa). The helical transmembrane segment at 469 to 489 threads the bilayer; sequence CILVYFLTYWLLGLIMHCNFL. Residues 490–492 lie on the Cytoplasmic side of the membrane; that stretch reads PWT.

Belongs to the PIGV family. In terms of processing, not N-glycosylated.

Its subcellular location is the endoplasmic reticulum membrane. It functions in the pathway glycolipid biosynthesis; glycosylphosphatidylinositol-anchor biosynthesis. Its function is as follows. Alpha-1,6-mannosyltransferase that catalyzes the transfer of the second mannose, via an alpha-1,6 bond, from a dolichol-phosphate-mannose (Dol-P-Man) to the alpha-D-Man-(1-&gt;4)-alpha-D-GlcN-(1-&gt;6)-(1-radyl,2-acyl-sn-glycero-3-phospho)-2-acyl-inositol (also termed H2) intermediate to generate an alpha-D-Man-(1-&gt;6)-alpha-D-Man-(1-&gt;4)-alpha-D-GlcN-(1-&gt;6)-(1-radyl,2-acyl-sn-glycero-3-phospho)-2-acyl-inositol (also termed H3) and participates in the seventh step of the glycosylphosphatidylinositol-anchor biosynthesis. Also transfers the second mannose on a 2-PEtn-alpha-D-Man-(1-&gt;4)-alpha-D-GlcN-(1-&gt;6)-(1-radyl,2-acyl-sn-glycero-3-phospho)-2-acyl-inositol (also termed H5). The chain is GPI alpha-1,6-mannosyltransferase 2 from Rattus norvegicus (Rat).